Reading from the N-terminus, the 411-residue chain is UPF0261 protein SACE_5696 (411 aa).

This sequence belongs to the UPF0261 family.

This Saccharopolyspora erythraea (strain ATCC 11635 / DSM 40517 / JCM 4748 / NBRC 13426 / NCIMB 8594 / NRRL 2338) protein is UPF0261 protein SACE_5696.